Here is a 74-residue protein sequence, read N- to C-terminus: Small ribosomal subunit protein bS18 (74 aa).

It belongs to the bacterial ribosomal protein bS18 family. In terms of assembly, part of the 30S ribosomal subunit. Forms a tight heterodimer with protein bS6.

Its function is as follows. Binds as a heterodimer with protein bS6 to the central domain of the 16S rRNA, where it helps stabilize the platform of the 30S subunit. This Novosphingobium aromaticivorans (strain ATCC 700278 / DSM 12444 / CCUG 56034 / CIP 105152 / NBRC 16084 / F199) protein is Small ribosomal subunit protein bS18.